The following is a 460-amino-acid chain: SPbeta prophage-derived uncharacterized protein YopQ (460 aa).

This is SPbeta prophage-derived uncharacterized protein YopQ (yopQ) from Bacillus subtilis (strain 168).